We begin with the raw amino-acid sequence, 477 residues long: UDP-galactose-lipid carrier transferase (477 aa).

6 helical membrane passes run 16–36, 52–72, 93–113, 115–135, 175–195, and 284–304; these read SLAL…IVLI, LDLK…WFWV, TILI…WELS, WIWI…RACV, VIAF…GVPV, and FDLV…VILI. The Cytoplasmic portion of the chain corresponds to 305–477; that stretch reads FMVSRDGGAP…GVVLKRDGAY (173 aa).

This sequence belongs to the bacterial sugar transferase family.

The protein localises to the cell membrane. It participates in glycan metabolism; exopolysaccharide biosynthesis. In terms of biological role, involved in the biosynthesis of amylovoran which functions as a virulence factor. May act as a sugar transferase and may be involved in the export of the repeating unit by flipping the lipid carrier to the periplasmic face of the inner membrane. The protein is UDP-galactose-lipid carrier transferase (amsG) of Erwinia amylovora (Fire blight bacteria).